The primary structure comprises 188 residues: Selenoprotein S B (188 aa).

The helical transmembrane segment at 29–49 (EALSNYGWYILLGCIVIYFLI) threads the bilayer. Over residues 116–125 (TWDRMQEGKS) the composition is skewed to basic and acidic residues. The tract at residues 116–188 (TWDRMQEGKS…RGPSSGGSUG (73 aa)) is disordered. Over residues 136-147 (ASPRTSTSSSAP) the composition is skewed to low complexity. Residue Sec-187 is a non-standard amino acid, selenocysteine.

The protein belongs to the selenoprotein S family.

The protein localises to the endoplasmic reticulum membrane. The protein resides in the cytoplasm. Involved in the degradation process of misfolded endoplasmic reticulum (ER) luminal proteins. Participates in the transfer of misfolded proteins from the ER to the cytosol, where they are destroyed by the proteasome in a ubiquitin-dependent manner. In Xenopus laevis (African clawed frog), this protein is Selenoprotein S B (vimp-b).